The sequence spans 350 residues: Membrane progestin receptor alpha (350 aa).

Residues 1–80 (MATMVAQKLS…HNEAVNVWTH (80 aa)) are Cytoplasmic-facing. Residues 81 to 101 (LLAALVLLLRLAIFVGTVDFW) traverse the membrane as a helical segment. Over 102 to 105 (GDPH) the chain is Extracellular. The chain crosses the membrane as a helical span at residues 106–126 (ALPLFIIVLASFTYLSLSALA). Over 127–139 (HLLQAKSEFWHYS) the chain is Cytoplasmic. The helical transmembrane segment at 140 to 160 (FFFLDYVGVAVYQFGSALAHF) threads the bilayer. At 161–165 (YYAIE) the chain is on the extracellular side. A helical membrane pass occupies residues 166-186 (PAWHAQVQTIFLPMAAFLAWL). Topologically, residues 187-239 (SCTGSCYNKYIQKPGLLGRTCQEVPSALAYALDISPVAHRILASPEPATDDPA) are cytoplasmic. A helical transmembrane segment spans residues 240 to 260 (LLYHKCQVVFFLLAAAFFSAF). Residues 261–278 (MPERWFPGSCHIFGQGHQ) lie on the Extracellular side of the membrane. Residues 279-299 (LFHVFLVLCTLAQLEAVALDY) traverse the membrane as a helical segment. Residues 300–318 (EARRPIYEPLHTRWPHNFS) lie on the Cytoplasmic side of the membrane. Residues 319 to 339 (GLFLLTVGSSILTAFLLSQLV) traverse the membrane as a helical segment. Over 340-350 (RRKLDLDRKTQ) the chain is Extracellular.

It belongs to the ADIPOR family.

The protein resides in the cell membrane. Plasma membrane progesterone (P4) receptor coupled to G proteins. Seems to act through a G(i) mediated pathway. May be involved in oocyte maturation. Involved in neurosteroid inhibition of apoptosis. Also binds dehydroepiandrosterone (DHEA), pregnanolone, pregnenolone and allopregnanolone. This Sus scrofa (Pig) protein is Membrane progestin receptor alpha (PAQR7).